A 126-amino-acid chain; its full sequence is Regulatory protein MgsR (126 aa).

A disulfide bridge connects residues C13 and C16.

The protein belongs to the ArsC family.

The protein resides in the cytoplasm. Its activity is regulated as follows. Activity is controlled at multiple levels. Regulation includes a positive autoregulatory loop on mgsR transcription and a post-translational redox-sensitive activation step by an intramolecular disulfide bond formation in response to ethanol stress. In addition, protein stability is strictly controlled by rapid proteolytic degradation by the ClpXP and ClpCP proteases. The McsB protein-arginine kinase might serve as a proteolytic adapter for the ClpX ATPase in the degradation mechanism of MgsR. Functionally, regulates transcription of a subregulon within the general stress response. Exerts positive and negative effects in response to ethanol stress. This is Regulatory protein MgsR from Bacillus subtilis (strain 168).